A 356-amino-acid polypeptide reads, in one-letter code: 3-dehydroquinate synthase (356 aa).

NAD(+) is bound by residues 69 to 74 (DGEKFK), 103 to 107 (GVIGD), 127 to 128 (TT), K140, K149, and 167 to 170 (CLKT). Zn(2+) contacts are provided by E182, H245, and H262.

It belongs to the sugar phosphate cyclases superfamily. Dehydroquinate synthase family. The cofactor is Co(2+). Zn(2+) is required as a cofactor. Requires NAD(+) as cofactor.

The protein resides in the cytoplasm. The catalysed reaction is 7-phospho-2-dehydro-3-deoxy-D-arabino-heptonate = 3-dehydroquinate + phosphate. It participates in metabolic intermediate biosynthesis; chorismate biosynthesis; chorismate from D-erythrose 4-phosphate and phosphoenolpyruvate: step 2/7. Catalyzes the conversion of 3-deoxy-D-arabino-heptulosonate 7-phosphate (DAHP) to dehydroquinate (DHQ). The chain is 3-dehydroquinate synthase from Psychromonas ingrahamii (strain DSM 17664 / CCUG 51855 / 37).